The sequence spans 205 residues: High frequency lysogenization protein HflD homolog (205 aa).

It belongs to the HflD family.

The protein localises to the cytoplasm. Its subcellular location is the cell inner membrane. This Shewanella pealeana (strain ATCC 700345 / ANG-SQ1) protein is High frequency lysogenization protein HflD homolog.